Here is a 285-residue protein sequence, read N- to C-terminus: ATP synthase gamma chain (285 aa).

Belongs to the ATPase gamma chain family. In terms of assembly, F-type ATPases have 2 components, CF(1) - the catalytic core - and CF(0) - the membrane proton channel. CF(1) has five subunits: alpha(3), beta(3), gamma(1), delta(1), epsilon(1). CF(0) has three main subunits: a, b and c.

It is found in the cell membrane. Produces ATP from ADP in the presence of a proton gradient across the membrane. The gamma chain is believed to be important in regulating ATPase activity and the flow of protons through the CF(0) complex. The chain is ATP synthase gamma chain from Dehalococcoides mccartyi (strain ATCC BAA-2100 / JCM 16839 / KCTC 5957 / BAV1).